Consider the following 557-residue polypeptide: MGNHKAALTKQVFTFASELYAYGVREVVISPGSRSTPLALAFEAHPNIKTWIHPDERSAAFFAVGLIKGSERPVAILCTSGTAAANYTPAIAESQISRIPLIVLTSDRPHELRSVGAPQAINQVNMFNNYVSYEFDMPIADDSKETIDAIYYQMQIASQYLYGPHKGPIHFNLPFRDPLTPDLNATELLTSEMKILPHYQKSIDASALRHILNKKKGLIIVGDMQHQEVDQILTYSTIYDLPILADPLSHLRKFDHPNVICTYDLLFRSGLDLKVDFVIRVGKPVISKKLNQWLKKTDAFQILVQNNDKIDVFPIAPDISYEISANDFFRSLMEDTTVNRVSWLEKWQRIEKKGRKEIKCYLEQATDESAFVGELIKKTSEKDALFISNSMPIRDVDNLLLNKNIDVYANRGANGIDGIVSTALGMAVHKRVTLLIGDLSFYHDMNGLLMSKLNNIQMNIVLLNNDGGGIFSYLPQKESATDYFERLFGTPTGLDFEYTAKLYQFDFKRFNNVSEFKNATLLSETSTIYELITNREDNFKQHQILYQKLSEMIHDTL.

It belongs to the TPP enzyme family. MenD subfamily. In terms of assembly, homodimer. Mg(2+) is required as a cofactor. Mn(2+) serves as cofactor. It depends on thiamine diphosphate as a cofactor.

It carries out the reaction isochorismate + 2-oxoglutarate + H(+) = 5-enolpyruvoyl-6-hydroxy-2-succinyl-cyclohex-3-ene-1-carboxylate + CO2. It functions in the pathway quinol/quinone metabolism; 1,4-dihydroxy-2-naphthoate biosynthesis; 1,4-dihydroxy-2-naphthoate from chorismate: step 2/7. The protein operates within quinol/quinone metabolism; menaquinone biosynthesis. In terms of biological role, catalyzes the thiamine diphosphate-dependent decarboxylation of 2-oxoglutarate and the subsequent addition of the resulting succinic semialdehyde-thiamine pyrophosphate anion to isochorismate to yield 2-succinyl-5-enolpyruvyl-6-hydroxy-3-cyclohexene-1-carboxylate (SEPHCHC). This chain is 2-succinyl-5-enolpyruvyl-6-hydroxy-3-cyclohexene-1-carboxylate synthase, found in Staphylococcus aureus (strain MRSA252).